A 524-amino-acid polypeptide reads, in one-letter code: Dihydromonacolin L monooxygenase mokC (524 aa).

At 1–25 (MTVPTDTVSRRLQSLAWSDIKQHAP) the chain is on the cytoplasmic side. The chain crosses the membrane as a helical; Signal-anchor for type II membrane protein span at residues 26–47 (WLPSSRTLVSGFLCLILLQILY). The Lumenal portion of the chain corresponds to 48 to 524 (SRGRKSDLRV…LMMRRRDEDL (477 aa)). N-linked (GlcNAc...) asparagine glycosylation is found at N396 and N401. Residue C467 coordinates heme.

This sequence belongs to the cytochrome P450 family. Requires heme as cofactor.

It localises to the endoplasmic reticulum membrane. The catalysed reaction is dihydromonacolin L carboxylate + reduced [NADPH--hemoprotein reductase] + O2 = monacolin L carboxylate + oxidized [NADPH--hemoprotein reductase] + 2 H2O + H(+). It catalyses the reaction monacolin L carboxylate + reduced [NADPH--hemoprotein reductase] + O2 = monacolin J carboxylate + oxidized [NADPH--hemoprotein reductase] + H2O + H(+). Its pathway is polyketide biosynthesis; lovastatin biosynthesis. Functionally, cytochrome P450 monooxygenase; part of the gene cluster that mediates the biosynthesis of monakolin K, also known as lovastatin, and which acts as a potent competitive inhibitor of HMG-CoA reductase. Monakolin K biosynthesis is performed in two stages. The first stage is catalyzed by the nonaketide synthase mokA, which belongs to type I polyketide synthases and catalyzes the iterative nine-step formation of the polyketide. This PKS stage is completed by the action of dehydrogenase mokE, which catalyzes the NADPH-dependent reduction of the unsaturated tetra-, penta- and heptaketide intermediates that arise during the mokA-mediated biosynthesis of the nonaketide chain and leads to dihydromonacolin L. Covalently bound dihydromonacolin L is released from mokA by the mokD esterase. Conversion of dihydromonacolin L into monacolin L and then monacolin J is subsequently performed with the participation of molecular oxygen and P450 monoogygenase mokC. Finally, mokF performs the conversion of monacoline J to monacoline K through the addition of the side-chain diketide moiety (2R)-2-methylbutanoate produced by the diketide synthase mokB. This Monascus pilosus (Red mold) protein is Dihydromonacolin L monooxygenase mokC.